The following is a 123-amino-acid chain: Small ribosomal subunit protein uS12 (123 aa).

Residue Asp89 is modified to 3-methylthioaspartic acid. Positions 100–123 (GSLDTSGVKDRKQGRSKYGAKRPK) are disordered. The span at 113-123 (GRSKYGAKRPK) shows a compositional bias: basic residues.

This sequence belongs to the universal ribosomal protein uS12 family. Part of the 30S ribosomal subunit. Contacts proteins S8 and S17. May interact with IF1 in the 30S initiation complex.

In terms of biological role, with S4 and S5 plays an important role in translational accuracy. Its function is as follows. Interacts with and stabilizes bases of the 16S rRNA that are involved in tRNA selection in the A site and with the mRNA backbone. Located at the interface of the 30S and 50S subunits, it traverses the body of the 30S subunit contacting proteins on the other side and probably holding the rRNA structure together. The combined cluster of proteins S8, S12 and S17 appears to hold together the shoulder and platform of the 30S subunit. The chain is Small ribosomal subunit protein uS12 from Pseudomonas aeruginosa (strain LESB58).